A 97-amino-acid polypeptide reads, in one-letter code: Large ribosomal subunit protein bL31 (97 aa).

Residues 76–97 (KTPKKAKGKTEEYTKHRSLNEL) are disordered. The segment covering 83–97 (GKTEEYTKHRSLNEL) has biased composition (basic and acidic residues).

This sequence belongs to the bacterial ribosomal protein bL31 family. Type A subfamily. Part of the 50S ribosomal subunit.

In terms of biological role, binds the 23S rRNA. The polypeptide is Large ribosomal subunit protein bL31 (Mycoplasma pneumoniae (strain ATCC 29342 / M129 / Subtype 1) (Mycoplasmoides pneumoniae)).